We begin with the raw amino-acid sequence, 465 residues long: Cysteine--tRNA ligase (465 aa).

Zn(2+) is bound at residue C30. The 'HIGH' region motif lies at 32 to 42 (ITVYDYCHVGH). C214, H239, and E243 together coordinate Zn(2+). The short motif at 271 to 275 (KMSKS) is the 'KMSKS' region element. K274 contacts ATP.

Belongs to the class-I aminoacyl-tRNA synthetase family. As to quaternary structure, monomer. Zn(2+) serves as cofactor.

The protein localises to the cytoplasm. It catalyses the reaction tRNA(Cys) + L-cysteine + ATP = L-cysteinyl-tRNA(Cys) + AMP + diphosphate. The protein is Cysteine--tRNA ligase of Burkholderia ambifaria (strain ATCC BAA-244 / DSM 16087 / CCUG 44356 / LMG 19182 / AMMD) (Burkholderia cepacia (strain AMMD)).